Reading from the N-terminus, the 362-residue chain is 3-isopropylmalate dehydrogenase (362 aa).

78–91 lines the NAD(+) pocket; sequence GPQWDTLPSDKRPE. Positions 98, 108, 136, and 226 each coordinate substrate. Positions 226, 250, and 254 each coordinate Mg(2+). 284–296 is an NAD(+) binding site; sequence GSAPDIAGQDKAN.

This sequence belongs to the isocitrate and isopropylmalate dehydrogenases family. LeuB type 1 subfamily. Homodimer. Requires Mg(2+) as cofactor. It depends on Mn(2+) as a cofactor.

The protein resides in the cytoplasm. It carries out the reaction (2R,3S)-3-isopropylmalate + NAD(+) = 4-methyl-2-oxopentanoate + CO2 + NADH. It participates in amino-acid biosynthesis; L-leucine biosynthesis; L-leucine from 3-methyl-2-oxobutanoate: step 3/4. Its function is as follows. Catalyzes the oxidation of 3-carboxy-2-hydroxy-4-methylpentanoate (3-isopropylmalate) to 3-carboxy-4-methyl-2-oxopentanoate. The product decarboxylates to 4-methyl-2 oxopentanoate. This is 3-isopropylmalate dehydrogenase from Gloeobacter violaceus (strain ATCC 29082 / PCC 7421).